We begin with the raw amino-acid sequence, 166 residues long: Large ribosomal subunit protein uL11z (166 aa).

This sequence belongs to the universal ribosomal protein uL11 family.

Functionally, binds directly to 26S ribosomal RNA. This chain is Large ribosomal subunit protein uL11z (RPL12A), found in Arabidopsis thaliana (Mouse-ear cress).